A 186-amino-acid polypeptide reads, in one-letter code: Large ribosomal subunit protein uL6 (186 aa).

Belongs to the universal ribosomal protein uL6 family. In terms of assembly, part of the 50S ribosomal subunit.

This protein binds to the 23S rRNA, and is important in its secondary structure. It is located near the subunit interface in the base of the L7/L12 stalk, and near the tRNA binding site of the peptidyltransferase center. The polypeptide is Large ribosomal subunit protein uL6 (Hyperthermus butylicus (strain DSM 5456 / JCM 9403 / PLM1-5)).